The primary structure comprises 282 residues: 2-dehydro-3-deoxyphosphooctonate aldolase (282 aa).

It belongs to the KdsA family.

It is found in the cytoplasm. It catalyses the reaction D-arabinose 5-phosphate + phosphoenolpyruvate + H2O = 3-deoxy-alpha-D-manno-2-octulosonate-8-phosphate + phosphate. It participates in carbohydrate biosynthesis; 3-deoxy-D-manno-octulosonate biosynthesis; 3-deoxy-D-manno-octulosonate from D-ribulose 5-phosphate: step 2/3. Its pathway is bacterial outer membrane biogenesis; lipopolysaccharide biosynthesis. The sequence is that of 2-dehydro-3-deoxyphosphooctonate aldolase from Chromobacterium violaceum (strain ATCC 12472 / DSM 30191 / JCM 1249 / CCUG 213 / NBRC 12614 / NCIMB 9131 / NCTC 9757 / MK).